Here is a 210-residue protein sequence, read N- to C-terminus: FMN-dependent NADH:quinone oxidoreductase 9 (210 aa).

FMN-binding positions include serine 10 and 16–18; that span reads SAS.

This sequence belongs to the azoreductase type 1 family. In terms of assembly, homodimer. FMN serves as cofactor.

The enzyme catalyses 2 a quinone + NADH + H(+) = 2 a 1,4-benzosemiquinone + NAD(+). The catalysed reaction is N,N-dimethyl-1,4-phenylenediamine + anthranilate + 2 NAD(+) = 2-(4-dimethylaminophenyl)diazenylbenzoate + 2 NADH + 2 H(+). Its function is as follows. Quinone reductase that provides resistance to thiol-specific stress caused by electrophilic quinones. In terms of biological role, also exhibits azoreductase activity. Catalyzes the reductive cleavage of the azo bond in aromatic azo compounds to the corresponding amines. The protein is FMN-dependent NADH:quinone oxidoreductase 9 of Burkholderia lata (strain ATCC 17760 / DSM 23089 / LMG 22485 / NCIMB 9086 / R18194 / 383).